A 225-amino-acid polypeptide reads, in one-letter code: Small ribosomal subunit protein uS3 (225 aa).

Residues 38–106 enclose the KH type-2 domain; it reads LRGHLRKKLS…DVALNIVEIR (69 aa).

The protein belongs to the universal ribosomal protein uS3 family. Part of the 30S ribosomal subunit. Forms a tight complex with proteins S10 and S14.

In terms of biological role, binds the lower part of the 30S subunit head. Binds mRNA in the 70S ribosome, positioning it for translation. The polypeptide is Small ribosomal subunit protein uS3 (Granulibacter bethesdensis (strain ATCC BAA-1260 / CGDNIH1)).